Consider the following 348-residue polypeptide: MGQCYYNETIGFFYNNSGKELSSHWRPKDVVVVALGLTVSVLVLLTNLLVIAAIASNRRFHQPIYYLLGNLAAADLFAGVAYLFLMFHTGPRTARLSLEGWFLRQGLLDTSLTASVATLLAIAVERHRSVMAVQLHSRLPRGRVVMLIVGVWVAALGLGLLPAHSWHCLCALDRCSRMAPLLSRSYLAVWALSSLLVFLLMVAVYTRIFFYVRRRVQRMAEHVSCHPRYRETTLSLVKTVVIILGAFVVCWTPGQVVLLLDGLGCESCNVLAVEKYFLLLAEANSLVNAAVYSCRDAEMRRTFRRLLCCACLRQSTRESVHYTSSAQGGASTRIMLPENGHPLMDSTL.

Residues 1 to 30 (MGQCYYNETIGFFYNNSGKELSSHWRPKDV) are Extracellular-facing. N-linked (GlcNAc...) asparagine glycans are attached at residues Asn-7 and Asn-15. The chain crosses the membrane as a helical span at residues 31–51 (VVVALGLTVSVLVLLTNLLVI). Topologically, residues 52 to 66 (AAIASNRRFHQPIYY) are cytoplasmic. A helical transmembrane segment spans residues 67–87 (LLGNLAAADLFAGVAYLFLMF). The Extracellular segment spans residues 88 to 100 (HTGPRTARLSLEG). The chain crosses the membrane as a helical span at residues 101 to 123 (WFLRQGLLDTSLTASVATLLAIA). Topologically, residues 124-143 (VERHRSVMAVQLHSRLPRGR) are cytoplasmic. Residues 144–164 (VVMLIVGVWVAALGLGLLPAH) traverse the membrane as a helical segment. At 165 to 185 (SWHCLCALDRCSRMAPLLSRS) the chain is on the extracellular side. The chain crosses the membrane as a helical span at residues 186–206 (YLAVWALSSLLVFLLMVAVYT). At 207 to 239 (RIFFYVRRRVQRMAEHVSCHPRYRETTLSLVKT) the chain is on the cytoplasmic side. The chain crosses the membrane as a helical span at residues 240–260 (VVIILGAFVVCWTPGQVVLLL). Topologically, residues 261–276 (DGLGCESCNVLAVEKY) are extracellular. The helical transmembrane segment at 277–294 (FLLLAEANSLVNAAVYSC) threads the bilayer. Residues 295 to 348 (RDAEMRRTFRRLLCCACLRQSTRESVHYTSSAQGGASTRIMLPENGHPLMDSTL) are Cytoplasmic-facing. Cys-308 carries S-palmitoyl cysteine lipidation. Positions 345–348 (DSTL) match the PDZ-binding motif.

This sequence belongs to the G-protein coupled receptor 1 family. In terms of assembly, interacts with SLC9A3R2/NHERF2, MAGI3 and PLCB3. Interacts with RALA and GRK2. Expressed most abundantly in testes and peripheral blood leukocytes with less expression in pancreas, spleen, thymus and prostate. Little or no expression in heart, brain, placenta, lung, liver, skeletal muscle, kidney, ovary, small intestine, or colon.

It localises to the cell surface. The protein localises to the cell membrane. Receptor for lysophosphatidic acid (LPA), a mediator of diverse cellular activities. Seems to be coupled to the G(i)/G(o), G(12)/G(13), and G(q) families of heteromeric G proteins. Plays a key role in phospholipase C-beta (PLC-beta) signaling pathway. Stimulates phospholipase C (PLC) activity in a manner that is independent of RALA activation. This Homo sapiens (Human) protein is Lysophosphatidic acid receptor 2.